A 917-amino-acid chain; its full sequence is MIAAQLLAYYFTELKDDQVKKIDKYLYAMRLSDETLIDIMTRFRKEMKNGLSRDFNPTATVKMLPTFVRSIPDGSEKGDFIALDLGGSSFRILRVQVNHEKNQNVHMESEVYDTPENIVHGSGSQLFDHVAECLGDFMEKRKIKDKKLPVGFTFSFPCQQSKIDEAILITWTKRFKASGVEGADVVKLLNKAIKKRGDYDANIVAVVNDTVGTMMTCGYDDQHCEVGLIIGTGTNACYMEELRHIDLVEGDEGRMCINTEWGAFGDDGSLEDIRTEFDREIDRGSLNPGKQLFEKMVSGMYLGELVRLILVKMAKEGLLFEGRITPELLTRGKFNTSDVSAIEKNKEGLHNAKEILTRLGVEPSDDDCVSVQHVCTIVSFRSANLVAATLGAILNRLRDNKGTPRLRTTVGVDGSLYKTHPQYSRRFHKTLRRLVPDSDVRFLLSESGSGKGAAMVTAVAYRLAEQHRQIEETLAHFHLTKDMLLEVKKRMRAEMELGLRKQTHNNAVVKMLPSFVRRTPDGTENGDFLALDLGGTNFRVLLVKIRSGKKRTVEMHNKIYAIPIEIMQGTGEELFDHIVSCISDFLDYMGIKGPRMPLGFTFSFPCQQTSLDAGILITWTKGFKATDCVGHDVVTLLRDAIKRREEFDLDVVAVVNDTVGTMMTCAYEEPTCEVGLIVGTGSNACYMEEMKNVEMVEGDQGQMCINMEWGAFGDNGCLDDIRTHYDRLVDEYSLNAGKQRYEKMISGMYLGEIVRNILIDFTKKGFLFRGQISETLKTRGIFETKFLSQIESDRLALLQVRAILQQLGLNSTCDDSILVKTVCGVVSRRAAQLCGAGMAAVVDKIRENRGLDRLNVTVGVDGTLYKLHPHFSRIMHQTVKELSPKCNVSFLLSEDGSGKGAALITAVGVRLRTEASS.

Met-1 carries the N-acetylmethionine modification. Residues 1–10 (MIAAQLLAYY) are mitochondrial-binding peptide (MBP). Hexokinase domains lie at 16-458 (DDQV…MVTA) and 464-906 (AEQH…LITA). ATP contacts are provided by residues Arg-30 and 84-89 (DLGGSS). The segment at 73-207 (DGSEKGDFIA…DYDANIVAVV (135 aa)) is hexokinase small subdomain 1. 84-91 (DLGGSSFR) lines the D-glucose 6-phosphate pocket. D-glucose contacts are provided by residues Ser-155, 172 to 173 (TK), and 208 to 209 (ND). The hexokinase large subdomain 1 stretch occupies residues 208–447 (NDTVGTMMTC…SDVRFLLSES (240 aa)). Asp-209 and Thr-232 together coordinate D-glucose 6-phosphate. Residues Asn-235, Glu-260, and 291–294 (QLFE) contribute to the D-glucose site. Ser-337 is modified (phosphoserine). ATP is bound at residue Asn-345. 413 to 415 (DGS) is a D-glucose 6-phosphate binding site. ATP is bound at residue 425-426 (RR). D-glucose 6-phosphate is bound by residues Ser-449 and 532 to 536 (DLGGT). Residues 521–655 (DGTENGDFLA…EFDLDVVAVV (135 aa)) are hexokinase small subdomain 2. ATP is bound at residue 532–537 (DLGGTN). D-glucose is bound by residues 603–604 (SF), 620–621 (TK), and 656–657 (ND). Residues 656 to 895 (NDTVGTMMTC…CNVSFLLSED (240 aa)) form a hexokinase large subdomain 2 region. Asp-657 and Thr-680 together coordinate D-glucose 6-phosphate. Thr-680 provides a ligand contact to ATP. D-glucose contacts are provided by residues 682–683 (SN), Glu-708, and Glu-742. ATP is bound by residues 747–748 (GM), 784–788 (TKFLS), and 863–867 (TLYKL). D-glucose 6-phosphate contacts are provided by residues 861–863 (DGT) and Ser-897.

Belongs to the hexokinase family. In terms of assembly, monomer. Interacts with RABL2/RABL2A; binds preferentially to GTP-bound RABL2. Interacts with VDAC1. The HK1-VDAC1 complex interacts with ATF2. Interacts (via N-terminal spermatogenic cell-specific region) with PFKM (via C-terminus). Interacts with SMAD5. In terms of tissue distribution, isoform 2: Erythrocyte specific. Isoform 3: Testis-specific. Isoform 4: Testis-specific.

The protein localises to the mitochondrion outer membrane. It is found in the cytoplasm. It localises to the cytosol. The enzyme catalyses a D-hexose + ATP = a D-hexose 6-phosphate + ADP + H(+). The catalysed reaction is D-fructose + ATP = D-fructose 6-phosphate + ADP + H(+). It carries out the reaction D-glucose + ATP = D-glucose 6-phosphate + ADP + H(+). It catalyses the reaction D-mannose + ATP = D-mannose 6-phosphate + ADP + H(+). The enzyme catalyses D-glucosamine + ATP = D-glucosamine 6-phosphate + ADP + H(+). It participates in carbohydrate metabolism; hexose metabolism. The protein operates within carbohydrate degradation; glycolysis; D-glyceraldehyde 3-phosphate and glycerone phosphate from D-glucose: step 1/4. Its activity is regulated as follows. Hexokinase is an allosteric enzyme inhibited by its product D-glucose 6-phosphate. Hexokinase activity is inhibited by N-acetyl-D-glucosamine. In terms of biological role, catalyzes the phosphorylation of various hexoses, such as D-glucose, D-glucosamine, D-fructose, D-mannose and 2-deoxy-D-glucose, to hexose 6-phosphate (D-glucose 6-phosphate, D-glucosamine 6-phosphate, D-fructose 6-phosphate, D-mannose 6-phosphate and 2-deoxy-D-glucose 6-phosphate, respectively). Does not phosphorylate N-acetyl-D-glucosamine. Mediates the initial step of glycolysis by catalyzing phosphorylation of D-glucose to D-glucose 6-phosphate. Involved in innate immunity and inflammation by acting as a pattern recognition receptor for bacterial peptidoglycan. When released in the cytosol, N-acetyl-D-glucosamine component of bacterial peptidoglycan inhibits the hexokinase activity of HK1 and causes its dissociation from mitochondrial outer membrane, thereby activating the NLRP3 inflammasome. This is Hexokinase-1 from Homo sapiens (Human).